A 219-amino-acid polypeptide reads, in one-letter code: 7-cyano-7-deazaguanine synthase (219 aa).

Phe-10–Leu-20 contacts ATP. Residues Cys-188, Cys-196, Cys-199, and Cys-202 each contribute to the Zn(2+) site.

It belongs to the QueC family. It depends on Zn(2+) as a cofactor.

The enzyme catalyses 7-carboxy-7-deazaguanine + NH4(+) + ATP = 7-cyano-7-deazaguanine + ADP + phosphate + H2O + H(+). Its pathway is purine metabolism; 7-cyano-7-deazaguanine biosynthesis. Its function is as follows. Catalyzes the ATP-dependent conversion of 7-carboxy-7-deazaguanine (CDG) to 7-cyano-7-deazaguanine (preQ(0)). This chain is 7-cyano-7-deazaguanine synthase, found in Neisseria meningitidis serogroup B (strain ATCC BAA-335 / MC58).